Reading from the N-terminus, the 296-residue chain is Arginase (296 aa).

Residues histidine 98, aspartate 124, histidine 126, and aspartate 128 each contribute to the Mn(2+) site. L-arginine-binding residues include asparagine 130, serine 137, and aspartate 178. Residues aspartate 225 and aspartate 227 each coordinate Mn(2+). L-arginine is bound by residues aspartate 227 and threonine 239.

The protein belongs to the arginase family. In terms of assembly, monomer. Homodimer; dimerization is dispensable for catalytic activity. Requires Mn(2+) as cofactor.

It catalyses the reaction L-arginine + H2O = urea + L-ornithine. It functions in the pathway nitrogen metabolism; urea cycle; L-ornithine and urea from L-arginine: step 1/1. Its activity is regulated as follows. Substitution of the loosely bound surface exposed Mn(2+) with Mg(2+), Zn(2+), Ni(2+) or Co(2+) results in similar catalytic activity, substitution with Cd(2+) and Cu(2+) reduces catalytic activity and substitution with Hg(2+) and Ca(2+) inhibits the enzyme. Inhibited by L-norvaline. Its function is as follows. Catalyzes the hydrolysis of L-arginine into urea and L-ornithine, which is a precursor for polyamine biosynthesis. By depleting host L-arginine, a substrate for nitric oxide synthase (NOS), prevents the production of nitric oxide (NO) by host activated macrophages, and thus allows the parasite to evade host immune response. The protein is Arginase of Entamoeba histolytica (strain ATCC 30459 / HM-1:IMSS / ABRM).